A 503-amino-acid chain; its full sequence is Probable cytosol aminopeptidase (503 aa).

2 residues coordinate Mn(2+): Lys274 and Asp279. Lys286 is a catalytic residue. Residues Asp297, Asp356, and Glu358 each coordinate Mn(2+). Residue Arg360 is part of the active site.

It belongs to the peptidase M17 family. Mn(2+) serves as cofactor.

It localises to the cytoplasm. It catalyses the reaction Release of an N-terminal amino acid, Xaa-|-Yaa-, in which Xaa is preferably Leu, but may be other amino acids including Pro although not Arg or Lys, and Yaa may be Pro. Amino acid amides and methyl esters are also readily hydrolyzed, but rates on arylamides are exceedingly low.. The enzyme catalyses Release of an N-terminal amino acid, preferentially leucine, but not glutamic or aspartic acids.. In terms of biological role, presumably involved in the processing and regular turnover of intracellular proteins. Catalyzes the removal of unsubstituted N-terminal amino acids from various peptides. The protein is Probable cytosol aminopeptidase of Burkholderia orbicola (strain MC0-3).